The chain runs to 220 residues: HTH-type transcriptional repressor GlaR (220 aa).

The HTH gntR-type domain maps to 1–69 (MTITSLDGYR…NQKGYRVASM (69 aa)). Residues 29–48 (MSLLTSRYALGVGPLREALS) constitute a DNA-binding region (H-T-H motif).

The protein localises to the cytoplasm. Its activity is regulated as follows. The repressive effect at the glaH promoter site is specifically relieved upon glutarate binding. In terms of biological role, negatively regulates the expression of the glaH-lhgD-gabDTP operon in a temporal manner during entry into stationary phase or during the first few hours of carbon starvation. Thereby is involved in the regulation of a L-lysine degradation pathway that proceeds via cadaverine, glutarate and L-2-hydroxyglutarate. Binds to two primary and two secondary sites in the promoter region of the glaH operon with the consensus sequences TTGTN5TTTT and ATGTN5TTTT of the primary sites, each separated by six nucleotides. In Escherichia coli (strain K12), this protein is HTH-type transcriptional repressor GlaR.